A 510-amino-acid polypeptide reads, in one-letter code: 2-isopropylmalate synthase (510 aa).

The Pyruvate carboxyltransferase domain occupies 5–267 (LVIFDTTLRD…DTRIDTTQIV (263 aa)). D14, H202, H204, and N238 together coordinate Mn(2+). Residues 392–510 (RLLSLHAVSE…SSLERTHPQI (119 aa)) form a regulatory domain region.

This sequence belongs to the alpha-IPM synthase/homocitrate synthase family. LeuA type 1 subfamily. Homodimer. It depends on Mn(2+) as a cofactor.

It localises to the cytoplasm. The enzyme catalyses 3-methyl-2-oxobutanoate + acetyl-CoA + H2O = (2S)-2-isopropylmalate + CoA + H(+). It participates in amino-acid biosynthesis; L-leucine biosynthesis; L-leucine from 3-methyl-2-oxobutanoate: step 1/4. Functionally, catalyzes the condensation of the acetyl group of acetyl-CoA with 3-methyl-2-oxobutanoate (2-ketoisovalerate) to form 3-carboxy-3-hydroxy-4-methylpentanoate (2-isopropylmalate). This Nitrosomonas europaea (strain ATCC 19718 / CIP 103999 / KCTC 2705 / NBRC 14298) protein is 2-isopropylmalate synthase.